A 105-amino-acid chain; its full sequence is MSKIRKGDEVILNTGKDKGKRGTVLRVLPTGQVLVEGINVVKKHAKPNPMRGIAGGIISKEMPVDISNVALFNRATQKGDRVGFKTLDDGRKVRVFKSSGEVVDA.

Belongs to the universal ribosomal protein uL24 family. Part of the 50S ribosomal subunit.

In terms of biological role, one of two assembly initiator proteins, it binds directly to the 5'-end of the 23S rRNA, where it nucleates assembly of the 50S subunit. One of the proteins that surrounds the polypeptide exit tunnel on the outside of the subunit. This Methylobacillus flagellatus (strain ATCC 51484 / DSM 6875 / VKM B-1610 / KT) protein is Large ribosomal subunit protein uL24.